The sequence spans 208 residues: Type 4 adapter protein LvgA (208 aa).

A disordered region spans residues 184-208 (GYGYPPESPRENYKHPVSSATTARK).

As to quaternary structure, the T4BSS is a complex nanomachine composed of several subcomplexes. This subunit is part of the Type IV Coupling Complex (T4CC), a subcomplex composed of the DotLMNYZ core and the IcmSW-LvgA adapter subunits, linked by the C-terminal tail of DotL.

It is found in the cytoplasm. Component of the Dot/Icm type IVB secretion system (T4BSS), which is used to inject bacterial effector proteins into eukaryotic host cells. Part of a subcomplex which recruits effector proteins and delivers them to the core transmembrane subcomplex. Is a critical subunit for binding a subset of effector proteins. Recognizes more than one type of binding motif. May be a critical factor that confers host specificity. Necessary for full virulence of the bacterium in guinea pigs and presumably humans. The polypeptide is Type 4 adapter protein LvgA (Legionella pneumophila).